Consider the following 189-residue polypeptide: Crossover junction endodeoxyribonuclease RuvC (189 aa).

Catalysis depends on residues aspartate 9, glutamate 70, and aspartate 143. Residues aspartate 9, glutamate 70, and aspartate 143 each contribute to the Mg(2+) site. Over residues 162–178 (MGAASGNSSLTPAQKAW) the composition is skewed to low complexity. Positions 162–189 (MGAASGNSSLTPAQKAWADAEAKARRKR) are disordered. Basic and acidic residues predominate over residues 179–189 (ADAEAKARRKR).

This sequence belongs to the RuvC family. In terms of assembly, homodimer which binds Holliday junction (HJ) DNA. The HJ becomes 2-fold symmetrical on binding to RuvC with unstacked arms; it has a different conformation from HJ DNA in complex with RuvA. In the full resolvosome a probable DNA-RuvA(4)-RuvB(12)-RuvC(2) complex forms which resolves the HJ. It depends on Mg(2+) as a cofactor.

The protein resides in the cytoplasm. The enzyme catalyses Endonucleolytic cleavage at a junction such as a reciprocal single-stranded crossover between two homologous DNA duplexes (Holliday junction).. In terms of biological role, the RuvA-RuvB-RuvC complex processes Holliday junction (HJ) DNA during genetic recombination and DNA repair. Endonuclease that resolves HJ intermediates. Cleaves cruciform DNA by making single-stranded nicks across the HJ at symmetrical positions within the homologous arms, yielding a 5'-phosphate and a 3'-hydroxyl group; requires a central core of homology in the junction. The consensus cleavage sequence is 5'-(A/T)TT(C/G)-3'. Cleavage occurs on the 3'-side of the TT dinucleotide at the point of strand exchange. HJ branch migration catalyzed by RuvA-RuvB allows RuvC to scan DNA until it finds its consensus sequence, where it cleaves and resolves the cruciform DNA. The chain is Crossover junction endodeoxyribonuclease RuvC from Paenarthrobacter aurescens (strain TC1).